Reading from the N-terminus, the 329-residue chain is tRNA uridine(34) hydroxylase (329 aa).

One can recognise a Rhodanese domain in the interval 123 to 217 (SDPDVILVDT…YLEEVPEEES (95 aa)). Residue Cys-177 is the Cysteine persulfide intermediate of the active site. The tract at residues 285-329 (REKQVQLSNARGETHVGGDAAHLIDQRKKEKLAHKEQQRSGKKAK) is disordered. Over residues 296–323 (GETHVGGDAAHLIDQRKKEKLAHKEQQR) the composition is skewed to basic and acidic residues.

The protein belongs to the TrhO family.

It catalyses the reaction uridine(34) in tRNA + AH2 + O2 = 5-hydroxyuridine(34) in tRNA + A + H2O. Its function is as follows. Catalyzes oxygen-dependent 5-hydroxyuridine (ho5U) modification at position 34 in tRNAs. The polypeptide is tRNA uridine(34) hydroxylase (Vibrio atlanticus (strain LGP32) (Vibrio splendidus (strain Mel32))).